The sequence spans 343 residues: DNA repair and recombination protein RadA (343 aa).

An ATP-binding site is contributed by 107 to 114; it reads GEFGAGKS.

The protein belongs to the eukaryotic RecA-like protein family.

Functionally, involved in DNA repair and in homologous recombination. Binds and assemble on single-stranded DNA to form a nucleoprotein filament. Hydrolyzes ATP in a ssDNA-dependent manner and promotes DNA strand exchange between homologous DNA molecules. The protein is DNA repair and recombination protein RadA of Halobacterium salinarum (strain ATCC 29341 / DSM 671 / R1).